We begin with the raw amino-acid sequence, 91 residues long: Putative transmembrane protein ORF91a (91 aa).

The next 3 membrane-spanning stretches (helical) occupy residues T17–A37, A40–M60, and G69–T89.

It localises to the host membrane. This Acidianus convivator (ABV) protein is Putative transmembrane protein ORF91a.